The chain runs to 548 residues: Natural resistance-associated macrophage protein 1 (548 aa).

Positions 1–12 are enriched in polar residues; it reads MSGDTGTPNQGG. The tract at residues 1–38 is disordered; sequence MSGDTGTPNQGGTRYGSISSPPSPGPQQAPPGGTYLSE. Residues 1 to 55 lie on the Cytoplasmic side of the membrane; it reads MSGDTGTPNQGGTRYGSISSPPSPGPQQAPPGGTYLSEKIPIPDTESGAFSLRKL. A helical membrane pass occupies residues 56–73; the sequence is WAFTGPGFLMSIAFLDPG. Over 74–82 the chain is Extracellular; that stretch reads NIESDLQAG. A helical transmembrane segment spans residues 83–102; it reads AVAGFKLLWVLLWATVLGLL. Residues 103–139 lie on the Cytoplasmic side of the membrane; the sequence is CQRLAARLGVVTGKDLGEVCHLYYPKVPRTLLWLTIE. The helical transmembrane segment at 140-160 threads the bilayer; that stretch reads LAIVGSDMQEVIGTAIAFSLL. At 161 to 164 the chain is on the extracellular side; that stretch reads SAGR. A helical membrane pass occupies residues 165 to 184; that stretch reads IPLWGGVLITIVDTFFFLFL. Over 185-193 the chain is Cytoplasmic; it reads DNYGLRKLE. Residues 194 to 214 traverse the membrane as a helical segment; sequence AFFGFLITIMALTFGYEYVVA. The Extracellular segment spans residues 215 to 237; it reads RPAQGALLQGLFLPSCPGCGQPE. A helical membrane pass occupies residues 238–256; the sequence is LLQAVGIVGAIIMPHNIYL. Residues 257–284 lie on the Cytoplasmic side of the membrane; sequence HSSLVKSREVDRSRRADIREANMYFLIE. A helical transmembrane segment spans residues 285–304; the sequence is ATIALSVSFFINLFVMAVFG. The Extracellular segment spans residues 305–346; it reads QAFYKQTNQAAFNICANSSLHDYATIFPRDNLTVAVDIYQGG. 2 N-linked (GlcNAc...) asparagine glycosylation sites follow: asparagine 321 and asparagine 335. Residues 347–366 form a helical membrane-spanning segment; that stretch reads VILGCLFGPAALYIWAVGLL. Over 367 to 397 the chain is Cytoplasmic; that stretch reads AAGQSSTMTGTYAGQFVMEGFLKLRWSRFAR. Residues 398-415 form a helical membrane-spanning segment; that stretch reads VLLTRSCAIPPTVLLAVF. Residues 416-426 are Extracellular-facing; the sequence is RDLQDLSGLND. Residues 427–447 traverse the membrane as a helical segment; that stretch reads LLNVLQSLLLPFAVLPILTFT. Topologically, residues 448–463 are cytoplasmic; it reads SMPALMQEFANGLVSK. A helical membrane pass occupies residues 464 to 485; the sequence is IITSSIMVLVCAVNLYFVISYV. The Extracellular segment spans residues 486–493; it reads PSLPHPAY. Residues 494 to 513 traverse the membrane as a helical segment; the sequence is FSLVALLAAAYLGLTTYLVW. Residues 514–548 are Cytoplasmic-facing; that stretch reads TCLITQGATRLAHSSHQRFLYGLPGEDQEEGRTSG.

This sequence belongs to the NRAMP family.

Its subcellular location is the late endosome membrane. The protein localises to the lysosome membrane. It carries out the reaction Zn(2+)(in) + H(+)(out) = Zn(2+)(out) + H(+)(in). It catalyses the reaction Fe(2+)(in) + H(+)(out) = Fe(2+)(out) + H(+)(in). The catalysed reaction is Mn(2+)(in) + H(+)(out) = Mn(2+)(out) + H(+)(in). Macrophage-specific antiporter that fluxes metal ions in either direction against a proton gradient. Localized to late endosomal lysosomal membranes, delivers bivalent cations from the cytosol into these acidic compartments where they may directly affect antimicrobial activity. Involved in iron metabolism and host natural resistance to infection with intracellular parasites. Pathogen resistance involves sequestration of Fe(2+) and Mn(2+), cofactors of both prokaryotic and eukaryotic catalases and superoxide dismutases, not only to protect the macrophage against its own generation of reactive oxygen species, but to deny the cations to the pathogen for synthesis of its protective enzymes. This is Natural resistance-associated macrophage protein 1 (SLC11A1) from Ovis aries (Sheep).